Consider the following 91-residue polypeptide: Alpha-defensin 31 (91 aa).

An N-terminal signal peptide occupies residues 1–19 (MKKLVLLFALVLLAFQVQA). Positions 20 to 65 (DSIQNTDEETKTEEQQGEEDQAVSVSFGDPQGSGLQDAALGWGRRC) are excised as a propeptide. A disordered region spans residues 22-55 (IQNTDEETKTEEQQGEEDQAVSVSFGDPQGSGLQ). Tandem repeats lie at residues 65 to 67 (CPR), 68 to 70 (CPP), 71 to 73 (CPR), 77 to 79 (CPR), 80 to 82 (CPT), and 83 to 85 (CPR). Residues 65-85 (CPRCPPCPRCSWCPRCPTCPR) form a 6 X 3 AA tandem repeats of C-P-X region.

Belongs to the alpha-defensin family. Paneth cells of the small bowel.

The protein resides in the secreted. Functionally, apparent precursor of a secreted, cationic, proline- and cysteine-rich peptide that contains Cys-Pro-Xaa repeats. Unlike cryptdin, the proposed mature peptide region lacks the structural motif characteristic of defensins. It may have microbicidal activities. This is Alpha-defensin 31 from Mus musculus (Mouse).